Consider the following 917-residue polypeptide: MLX-interacting protein (917 aa).

The disordered stretch occupies residues 1-72 (MAADVFMCSP…AGPGREEPPR (72 aa)). An N-acetylalanine modification is found at Ala2. A phosphoserine mark is found at Ser9, Ser33, and Ser39. Acidic residues predominate over residues 27–37 (PEDDDDSDTDE). Low complexity predominate over residues 47 to 57 (ATSARAHASAA). A required for cytoplasmic localization region spans residues 73–327 (RQQIIHSGHF…PLQPNLDFMD (255 aa)). The interval 322 to 445 (NLDFMDTFEP…LLSPGPAPAP (124 aa)) is transactivation domain. Disordered stretches follow at residues 347 to 402 (LPPP…CERT) and 632 to 711 (SHST…TDPK). Residues 378–388 (LPNSLITSSAA) are compositionally biased toward polar residues. Over residues 632 to 643 (SHSTSSQPSPVS) the composition is skewed to low complexity. Ser667 is modified (phosphoserine). Positions 670-685 (VPATGSSRDCPNSGQA) are enriched in polar residues. Positions 686 to 704 (SPCPSEQSPSPQSPQNNCS) are enriched in low complexity. A bHLH domain is found at 717 to 767 (KNRQKHISAEQKRRFNIRMGFNTLNSLISNNSKQTSHAITLQKTMEYITKL). The leucine-zipper stretch occupies residues 767-788 (LQQERMQMQEEARRLREEIEEL). The segment at 830 to 879 (WKFWIFSMIIKPLFESFKGMVSTSSLEEFHRTALSWLDQHCSLPVLRPMV) is mediates heterotypic interactions between MLXIP and MLX and is required for cytoplasmic localization. The tract at residues 897-917 (SQLPEQASEAVTRMGKRSGES) is disordered.

Efficient DNA binding requires dimerization with another bHLH protein. Binds DNA as a homodimer or a heterodimer with MLX/TCFL4.

It is found in the cytoplasm. Its subcellular location is the nucleus. The protein localises to the mitochondrion outer membrane. Binds DNA as a heterodimer with MLX/TCFL4 and activates transcription. Binds to the canonical E box sequence 5'-CACGTG-3'. Plays a role in transcriptional activation of glycolytic target genes. Involved in glucose-responsive gene regulation. Regulates transcription in response to changes in cellular carbohydrate abundance such as occurs during fasting to feeding metabolic transition. Refeeding stimulates MLXIPL/ChREBP transcription factor, leading to increased BCKDK to PPM1K expression ratio, phosphorylation and activation of ACLY that ultimately results in the generation of malonyl-CoA and oxaloacetate immediate substrates of de novo lipogenesis and gluconeogenesis, respectively. In Mus musculus (Mouse), this protein is MLX-interacting protein.